A 229-amino-acid polypeptide reads, in one-letter code: Large ribosomal subunit protein uL1 (229 aa).

It belongs to the universal ribosomal protein uL1 family. As to quaternary structure, part of the 50S ribosomal subunit.

Binds directly to 23S rRNA. The L1 stalk is quite mobile in the ribosome, and is involved in E site tRNA release. Its function is as follows. Protein L1 is also a translational repressor protein, it controls the translation of the L11 operon by binding to its mRNA. In Histophilus somni (strain 129Pt) (Haemophilus somnus), this protein is Large ribosomal subunit protein uL1.